The chain runs to 254 residues: L-erythrulose-1-phosphate isomerase (254 aa).

His97 serves as the catalytic Electrophile. Glu170 (proton acceptor) is an active-site residue. 2 residues coordinate substrate: Gly176 and Ser213.

The protein belongs to the triosephosphate isomerase family. In terms of assembly, homodimer.

The protein localises to the cytoplasm. It carries out the reaction L-erythrulose 1-phosphate = D-erythrulose 4-phosphate. It participates in carbohydrate metabolism; erythritol degradation. Catalyzes the isomerization of D-erythrulose-4P to L-erythrulose-1P. This Mesorhizobium japonicum (strain LMG 29417 / CECT 9101 / MAFF 303099) (Mesorhizobium loti (strain MAFF 303099)) protein is L-erythrulose-1-phosphate isomerase.